The chain runs to 330 residues: uncharacterized protein (330 aa).

The ABC transporter domain maps to 4–242 (LTISDLVVEY…AGEVLFEQST (239 aa)). 40-47 (GPSGCGKT) lines the ATP pocket. 210–330 (DRVLELMPAQ…LIEHRELASE (121 aa)) provides a ligand contact to a nucleoside 3',5'-cyclic phosphate.

Belongs to the ABC transporter superfamily.

This is an uncharacterized protein from Mycobacterium bovis (strain ATCC BAA-935 / AF2122/97).